The following is a 102-amino-acid chain: Small ribosomal subunit protein uS10 (102 aa).

Belongs to the universal ribosomal protein uS10 family. Part of the 30S ribosomal subunit.

In terms of biological role, involved in the binding of tRNA to the ribosomes. This Parafrankia sp. (strain EAN1pec) protein is Small ribosomal subunit protein uS10.